The sequence spans 496 residues: MAVASRLAVARVAPDGGAAGRRRRRRGRPVVAVPTAAGRGRGRGGAVAASPPTEEAVQMTEPLTKEDLMAYLVSGCKPKENWRIGTEHEKFGFEVDTLRPIKYDQIRDILNGLAERFDWDKIVEENNVIGLKQGKQSISLEPGGQFELSGAPLETLHQTCAEVNSHLYQVKAVGEEMGIGFLGIGFQPKWALSDIPIMPKGRYEIMRNYMPKVGSLGLDMMFRTCTVQVNLDFSSEQDMIRKFRTGLALQPIATAIFANSPFKEGKPNGYLSLRSHIWTDTDNNRSGMLPFVFDDSFGFERYVDYALDVPMYFVYRNKKYIDCTGMSFRDFMVGKLPQAPGELPTLNDWENHLTTIFPEVRLKRYLEMRGADGGPWRRLCALPAFWVGLLYDEESLQSISDMTSDWTNEEREMLRRKVPVTGLKTPFRDGYVRDLAEEILQLSKNGLERRGYKEVGFLREVDAVISSGVTPAERLLNLYETKWQRSVDPVFQELLY.

A chloroplast-targeting transit peptide spans 1–34; the sequence is MAVASRLAVARVAPDGGAAGRRRRRRGRPVVAVP. A disordered region spans residues 14-53; the sequence is PDGGAAGRRRRRRGRPVVAVPTAAGRGRGRGGAVAASPPT. The segment covering 29 to 38 has biased composition (low complexity); it reads PVVAVPTAAG. Residues C160 and C380 are joined by a disulfide bond.

Belongs to the carboxylate-amine ligase family. Glutamate--cysteine ligase type 2 subfamily. Homodimer or monomer when oxidized or reduced, respectively. Post-translationally, the Cys-160-Cys-380 disulfide bridge is known to modulate the enzyme activity according to the redox status. The oxidized form constitutes the active enzyme.

It is found in the plastid. It localises to the chloroplast. It carries out the reaction L-cysteine + L-glutamate + ATP = gamma-L-glutamyl-L-cysteine + ADP + phosphate + H(+). It functions in the pathway sulfur metabolism; glutathione biosynthesis; glutathione from L-cysteine and L-glutamate: step 1/2. The sequence is that of Glutamate--cysteine ligase B, chloroplastic (GSH1-2) from Oryza sativa subsp. japonica (Rice).